Reading from the N-terminus, the 671-residue chain is DNA polymerase kappa (671 aa).

The 181-residue stretch at tryptophan 105 to glycine 285 folds into the UmuC domain. Residues aspartate 109 and aspartate 200 each contribute to the Mg(2+) site. Residue glutamate 201 is part of the active site. The segment at tyrosine 576–glutamate 613 adopts a UBZ3-type zinc-finger fold. Zn(2+) contacts are provided by cysteine 583, cysteine 586, histidine 601, and histidine 605. Residues alanine 607–lysine 671 are disordered. A Nuclear localization signal motif is present at residues lysine 625–glutamate 632. A compositionally biased stretch (basic and acidic residues) spans leucine 629 to lysine 650. Positions threonine 659–lysine 671 are enriched in polar residues.

Belongs to the DNA polymerase type-Y family. Mg(2+) is required as a cofactor. Expressed in roots, leaves, stems, flowers and siliques. Present in endoreduplicating cells.

The protein localises to the nucleus. It catalyses the reaction DNA(n) + a 2'-deoxyribonucleoside 5'-triphosphate = DNA(n+1) + diphosphate. With respect to regulation, unable to bypass a single 1,N(6)-ethenoadenine (epsilon-dA) or an abasic site lesions in DNA templates. Its function is as follows. Template-directed low-fidelity DNA polymerase specifically involved in DNA repair. Able to extend primer-terminal mispairs, and to insert nucleotides opposite to a single 7,8-dihydro-8-oxoGuanine (8-oxoG) lesion and moderately extend from the resulting primer end, thus leading to both error-free and error-prone bypass of 8-oxoG DNA lesions. Probably involved in consecutive DNA replication cycles in the absence of mitosis. Binds preferentially template-primer DNA substrates or single-stranded DNA. Plays an important role in translesion synthesis, where the normal high-fidelity DNA polymerases cannot proceed and DNA synthesis stalls. Depending on the context, it inserts the correct base, but causes frequent base transitions, transversions and frameshifts. This Arabidopsis thaliana (Mouse-ear cress) protein is DNA polymerase kappa.